The following is a 244-amino-acid chain: Methanethiol S-methyltransferase (244 aa).

Transmembrane regions (helical) follow at residues 7-27 (IIYG…AIGF), 41-61 (IAAP…VFAV), 90-110 (LLAS…PAVI), 120-140 (VALW…TFMI), and 181-201 (GFVV…LFAI).

The protein belongs to the nurim family.

It is found in the membrane. It carries out the reaction methanethiol + S-adenosyl-L-methionine = dimethyl sulfide + S-adenosyl-L-homocysteine + H(+). Functionally, catalyzes the methylation of methanethiol (MeSH) to yield dimethylsulphide (DMS). The protein is Methanethiol S-methyltransferase of Mycobacterium tuberculosis (strain ATCC 25618 / H37Rv).